Consider the following 133-residue polypeptide: UPF0102 protein AB57_1130 (133 aa).

This sequence belongs to the UPF0102 family.

The polypeptide is UPF0102 protein AB57_1130 (Acinetobacter baumannii (strain AB0057)).